The following is a 313-amino-acid chain: Aspartate carbamoyltransferase catalytic subunit (313 aa).

Arg58 and Thr59 together coordinate carbamoyl phosphate. L-aspartate is bound at residue Lys86. The carbamoyl phosphate site is built by Arg108, His136, and Gln139. Residues Arg169 and Arg223 each coordinate L-aspartate. Carbamoyl phosphate contacts are provided by Gly265 and Pro266.

The protein belongs to the aspartate/ornithine carbamoyltransferase superfamily. ATCase family. As to quaternary structure, heterododecamer (2C3:3R2) of six catalytic PyrB chains organized as two trimers (C3), and six regulatory PyrI chains organized as three dimers (R2).

It carries out the reaction carbamoyl phosphate + L-aspartate = N-carbamoyl-L-aspartate + phosphate + H(+). It functions in the pathway pyrimidine metabolism; UMP biosynthesis via de novo pathway; (S)-dihydroorotate from bicarbonate: step 2/3. Functionally, catalyzes the condensation of carbamoyl phosphate and aspartate to form carbamoyl aspartate and inorganic phosphate, the committed step in the de novo pyrimidine nucleotide biosynthesis pathway. This chain is Aspartate carbamoyltransferase catalytic subunit, found in Anaeromyxobacter dehalogenans (strain 2CP-1 / ATCC BAA-258).